A 637-amino-acid chain; its full sequence is Chaperone protein HtpG (637 aa).

The tract at residues 1–345 (MSQQETHGFQ…SNDLPLNVSR (345 aa)) is a; substrate-binding. The segment at 346 to 562 (EILQDNQVTT…EGEMSTQMIK (217 aa)) is b. Residues 563 to 637 (LMQAAGQAVP…MNQMLLANAK (75 aa)) are c.

It belongs to the heat shock protein 90 family. As to quaternary structure, homodimer.

Its subcellular location is the cytoplasm. In terms of biological role, molecular chaperone. Has ATPase activity. The chain is Chaperone protein HtpG from Shewanella denitrificans (strain OS217 / ATCC BAA-1090 / DSM 15013).